We begin with the raw amino-acid sequence, 597 residues long: Aspartate--tRNA(Asp/Asn) ligase (597 aa).

Glu170 provides a ligand contact to L-aspartate. The tract at residues 194 to 197 is aspartate; that stretch reads QLFK. Arg216 contacts L-aspartate. ATP contacts are provided by residues 216-218 and Gln225; that span reads RDE. Residue His448 coordinates L-aspartate. Residue Glu482 participates in ATP binding. Arg489 serves as a coordination point for L-aspartate. 534–537 is a binding site for ATP; that stretch reads GWDR. The tract at residues 558–597 is disordered; sequence GGGVDPLTDAPAPITAAQRKESGIDAKPEKAEKAGKPADA. Residues 575–597 show a composition bias toward basic and acidic residues; that stretch reads QRKESGIDAKPEKAEKAGKPADA.

It belongs to the class-II aminoacyl-tRNA synthetase family. Type 1 subfamily. In terms of assembly, homodimer.

The protein localises to the cytoplasm. The catalysed reaction is tRNA(Asx) + L-aspartate + ATP = L-aspartyl-tRNA(Asx) + AMP + diphosphate. Its function is as follows. Aspartyl-tRNA synthetase with relaxed tRNA specificity since it is able to aspartylate not only its cognate tRNA(Asp) but also tRNA(Asn). Reaction proceeds in two steps: L-aspartate is first activated by ATP to form Asp-AMP and then transferred to the acceptor end of tRNA(Asp/Asn). This is Aspartate--tRNA(Asp/Asn) ligase from Mycobacteroides abscessus (strain ATCC 19977 / DSM 44196 / CCUG 20993 / CIP 104536 / JCM 13569 / NCTC 13031 / TMC 1543 / L948) (Mycobacterium abscessus).